Here is a 345-residue protein sequence, read N- to C-terminus: DNA-directed RNA polymerases I and III subunit rpac1 (345 aa).

Over residues 1-11 (MVNKSTTNGVS) the composition is skewed to polar residues. The tract at residues 1–20 (MVNKSTTNGVSDPNLENKRT) is disordered.

Belongs to the archaeal Rpo3/eukaryotic RPB3 RNA polymerase subunit family. In terms of assembly, component of the RNA polymerase I (Pol I) and RNA polymerase III (Pol III) complexes consisting of at least 13 and 17 subunits, respectively. Interacts with RPAC19/RPAC2.

It is found in the nucleus. In terms of biological role, DNA-dependent RNA polymerase catalyzes the transcription of DNA into RNA using the four ribonucleoside triphosphates as substrates. Common component of RNA polymerases I and III which synthesize ribosomal RNA precursors and small RNAs, such as 5S rRNA and tRNAs, respectively. RPAC1 is part of the Pol core element with the central large cleft and probably a clamp element that moves to open and close the cleft. The polypeptide is DNA-directed RNA polymerases I and III subunit rpac1 (polr1c) (Dictyostelium discoideum (Social amoeba)).